The sequence spans 99 residues: Malonate decarboxylase acyl carrier protein (99 aa).

S25 is subject to O-(phosphoribosyl dephospho-coenzyme A)serine.

It belongs to the MdcC family. In terms of processing, covalently binds the prosthetic group of malonate decarboxylase.

Its subcellular location is the cytoplasm. Subunit of malonate decarboxylase, it is an acyl carrier protein to which acetyl and malonyl thioester residues are bound via a 2'-(5''-phosphoribosyl)-3'-dephospho-CoA prosthetic group and turn over during the catalytic mechanism. The polypeptide is Malonate decarboxylase acyl carrier protein (Pseudomonas syringae pv. syringae (strain B728a)).